An 89-amino-acid polypeptide reads, in one-letter code: Small ribosomal subunit protein uS15 (89 aa).

Belongs to the universal ribosomal protein uS15 family. As to quaternary structure, part of the 30S ribosomal subunit. Forms a bridge to the 50S subunit in the 70S ribosome, contacting the 23S rRNA.

Functionally, one of the primary rRNA binding proteins, it binds directly to 16S rRNA where it helps nucleate assembly of the platform of the 30S subunit by binding and bridging several RNA helices of the 16S rRNA. Its function is as follows. Forms an intersubunit bridge (bridge B4) with the 23S rRNA of the 50S subunit in the ribosome. The sequence is that of Small ribosomal subunit protein uS15 from Tolumonas auensis (strain DSM 9187 / NBRC 110442 / TA 4).